The chain runs to 36 residues: Potassium channel toxin alpha-KTx 16.5 (36 aa).

3 disulfide bridges follow: C7–C28, C13–C33, and C17–C35. Positions 26-33 are interaction with Ca(2+)-activated K(+) channels; the sequence is GKCQNKQC.

This sequence belongs to the short scorpion toxin superfamily. Potassium channel inhibitor family. Alpha-KTx 16 subfamily. Expressed by the venom gland.

Its subcellular location is the secreted. Functionally, augments responses to direct muscle stimulation probably by blocking calcium-activated potassium channels. The polypeptide is Potassium channel toxin alpha-KTx 16.5 (Leiurus hebraeus (Hebrew deathstalker scorpion)).